The primary structure comprises 181 residues: NADH-quinone oxidoreductase subunit I 2 (181 aa).

2 consecutive 4Fe-4S ferredoxin-type domains span residues 44–74 (LNRY…VEGA) and 90–119 (RVYQ…MTND). The [4Fe-4S] cluster site is built by C54, C57, C60, C64, C99, C102, C105, and C109.

Belongs to the complex I 23 kDa subunit family. NDH-1 is composed of 14 different subunits. Subunits NuoA, H, J, K, L, M, N constitute the membrane sector of the complex. [4Fe-4S] cluster is required as a cofactor.

It is found in the cell membrane. The enzyme catalyses a quinone + NADH + 5 H(+)(in) = a quinol + NAD(+) + 4 H(+)(out). In terms of biological role, NDH-1 shuttles electrons from NADH, via FMN and iron-sulfur (Fe-S) centers, to quinones in the respiratory chain. The immediate electron acceptor for the enzyme in this species is believed to be menaquinone. Couples the redox reaction to proton translocation (for every two electrons transferred, four hydrogen ions are translocated across the cytoplasmic membrane), and thus conserves the redox energy in a proton gradient. In Mycolicibacterium paratuberculosis (strain ATCC BAA-968 / K-10) (Mycobacterium paratuberculosis), this protein is NADH-quinone oxidoreductase subunit I 2.